A 348-amino-acid chain; its full sequence is D-alanine--D-alanine ligase (348 aa).

The 203-residue stretch at 132 to 334 (KRILEVAGVP…YSDLIKELVV (203 aa)) folds into the ATP-grasp domain. Residue 162–217 (LEKLTFPVFVKPANMGSSVGISKAENESELRSAIDLALKYDSRILIEQGVVAREIE) coordinates ATP. Residues Asp-288, Glu-301, and Asn-303 each contribute to the Mg(2+) site.

Belongs to the D-alanine--D-alanine ligase family. Mg(2+) serves as cofactor. Mn(2+) is required as a cofactor.

Its subcellular location is the cytoplasm. The catalysed reaction is 2 D-alanine + ATP = D-alanyl-D-alanine + ADP + phosphate + H(+). It functions in the pathway cell wall biogenesis; peptidoglycan biosynthesis. Its function is as follows. Cell wall formation. This Streptococcus thermophilus (strain ATCC BAA-250 / LMG 18311) protein is D-alanine--D-alanine ligase.